Here is a 519-residue protein sequence, read N- to C-terminus: Galactokinase (519 aa).

Arg-47, Glu-53, His-54, and Asp-56 together coordinate alpha-D-galactose. ATP is bound by residues Gly-159, Gly-161, Ser-163, and Ser-164. Asp-209 is an alpha-D-galactose binding site. The active-site Proton acceptor is Asp-209. Positions 257 and 258 each coordinate ATP. Tyr-266 contributes to the alpha-D-galactose binding site.

The protein belongs to the GHMP kinase family. GalK subfamily.

It carries out the reaction alpha-D-galactose + ATP = alpha-D-galactose 1-phosphate + ADP + H(+). It participates in carbohydrate metabolism; galactose metabolism. In terms of biological role, galactokinase is a key enzyme in the galactose metabolism where it catalyzes the conversion of alpha-D-galactose to galactose 1-phosphate. Can also induce the transcription of the gal genes in response to the organism being challenged with galactose as the sole source of carbon. The protein is Galactokinase (gal1) of Schizosaccharomyces pombe (strain 972 / ATCC 24843) (Fission yeast).